The sequence spans 429 residues: Putative zinc metalloprotease aq_1964 (429 aa).

Residue His-17 coordinates Zn(2+). The active site involves Glu-18. Zn(2+) is bound at residue His-21. The chain crosses the membrane as a helical span at residues 88–110; it reads ILIALGGPLFNFLFTILVFALVY. A PDZ domain is found at 189-265; it reads TIKVPNVQKG…AIKLKILRNG (77 aa). The next 2 membrane-spanning stretches (helical) occupy residues 369–391 and 406–428; these read IFNL…IEWL and RVGL…LRLL.

It belongs to the peptidase M50B family. It depends on Zn(2+) as a cofactor.

Its subcellular location is the cell inner membrane. The sequence is that of Putative zinc metalloprotease aq_1964 from Aquifex aeolicus (strain VF5).